Consider the following 645-residue polypeptide: 1,4-alpha-glucan branching enzyme GlgB (645 aa).

Asp-309 serves as the catalytic Nucleophile. Residue Glu-352 is the Proton donor of the active site. A disordered region spans residues 619-645; sequence VKTRKGSKKQDGSKTKVRSNVTSRGKR. Residues 636–645 show a composition bias toward polar residues; sequence RSNVTSRGKR.

It belongs to the glycosyl hydrolase 13 family. GlgB subfamily. Monomer.

It catalyses the reaction Transfers a segment of a (1-&gt;4)-alpha-D-glucan chain to a primary hydroxy group in a similar glucan chain.. It participates in glycan biosynthesis; glycogen biosynthesis. Catalyzes the formation of the alpha-1,6-glucosidic linkages in glycogen by scission of a 1,4-alpha-linked oligosaccharide from growing alpha-1,4-glucan chains and the subsequent attachment of the oligosaccharide to the alpha-1,6 position. The sequence is that of 1,4-alpha-glucan branching enzyme GlgB from Bacillus cereus (strain G9842).